The chain runs to 607 residues: Phosphomethylpyrimidine synthase (607 aa).

Substrate contacts are provided by residues N216, M245, Y274, H310, 330–332 (SRG), 371–374 (DGLR), and E410. H414 is a Zn(2+) binding site. Residue Y437 participates in substrate binding. H478 lines the Zn(2+) pocket. The [4Fe-4S] cluster site is built by C558, C561, and C566.

The protein belongs to the ThiC family. As to quaternary structure, homodimer. [4Fe-4S] cluster serves as cofactor.

The catalysed reaction is 5-amino-1-(5-phospho-beta-D-ribosyl)imidazole + S-adenosyl-L-methionine = 4-amino-2-methyl-5-(phosphooxymethyl)pyrimidine + CO + 5'-deoxyadenosine + formate + L-methionine + 3 H(+). It participates in cofactor biosynthesis; thiamine diphosphate biosynthesis. In terms of biological role, catalyzes the synthesis of the hydroxymethylpyrimidine phosphate (HMP-P) moiety of thiamine from aminoimidazole ribotide (AIR) in a radical S-adenosyl-L-methionine (SAM)-dependent reaction. The chain is Phosphomethylpyrimidine synthase from Agrobacterium fabrum (strain C58 / ATCC 33970) (Agrobacterium tumefaciens (strain C58)).